Here is a 229-residue protein sequence, read N- to C-terminus: Ribosome maturation factor RimM (229 aa).

Residues 1 to 37 (MAGHDSGNAKRGRSPSFGVFVRKPVERTSAKGTSDGA) are disordered. The PRC barrel domain maps to 148–229 (ADEFYWVDLI…RVVVDWEADY (82 aa)).

Belongs to the RimM family. In terms of assembly, binds ribosomal protein uS19.

Its subcellular location is the cytoplasm. In terms of biological role, an accessory protein needed during the final step in the assembly of 30S ribosomal subunit, possibly for assembly of the head region. Essential for efficient processing of 16S rRNA. May be needed both before and after RbfA during the maturation of 16S rRNA. It has affinity for free ribosomal 30S subunits but not for 70S ribosomes. The polypeptide is Ribosome maturation factor RimM (Burkholderia pseudomallei (strain 668)).